Here is a 680-residue protein sequence, read N- to C-terminus: MIDRYKHQQLRIGSVSPQQIRAWANKILPNGEIIGEVTKPYTFHYKTNKPEKDGLFCERIFGPIKSGICACGNYRIIGDEKEDPQFCEQCGVEFVDSRIRRYQMGYIKLGCPVTHVWYLKRLPSYIANLLDKPLKELEGLVYCDFSFARPIAKKPTFLRLRGSFEYEIQSWKYSIPLFFTTQGFDKFRNREISTGAVAIREQLADLDLRIILDNSLLEWKELGEEGPAGNDWEDRKIGRRRDFLVRRMELAKHFLRTNIEPEWMVLCLLPVLPPELRPIIQIDGGKLMSSDINELYRRVIYRNNTLIDLLTTSRSTPGELVMCQEKLVQEAVDTLLDNGIRGQPMRDGHNKIYKSFSDVIEGKEGRFRETLLGKRVDYSGRSVIVVGPSLSLHQCGLPREIAIELFQTFVICGLIRQHLASNIGVAKSKIREKGPIIWEILQEVMQGHPVLLNRAPTLHRLGVQAFQPILVEGRAICLHPLVCKGFNADFDGDQMAVHVPLSLEAQAEARLLMFSHMNLLSPTIGDPISIPTQDMLIGLYVLTSGNRRGICANRYNTWNRRNYPDERIDDNSYTYTKEPLFCNSYDAIGAYRQKRINLDSPLWLRWRLDQRLIASREAPIEVHYESLGTSHEIYGHYLIVRSVKKEILSIYIRTTVGHISLYREIEEAIQGFCRACSYGT.

Positions 69, 71, 87, and 90 each coordinate Zn(2+). 3 residues coordinate Mg(2+): Asp489, Asp491, and Asp493.

Belongs to the RNA polymerase beta' chain family. RpoC1 subfamily. In terms of assembly, in plastids the minimal PEP RNA polymerase catalytic core is composed of four subunits: alpha, beta, beta', and beta''. When a (nuclear-encoded) sigma factor is associated with the core the holoenzyme is formed, which can initiate transcription. Requires Mg(2+) as cofactor. It depends on Zn(2+) as a cofactor.

Its subcellular location is the plastid. The protein localises to the chloroplast. The catalysed reaction is RNA(n) + a ribonucleoside 5'-triphosphate = RNA(n+1) + diphosphate. In terms of biological role, DNA-dependent RNA polymerase catalyzes the transcription of DNA into RNA using the four ribonucleoside triphosphates as substrates. In Citrus sinensis (Sweet orange), this protein is DNA-directed RNA polymerase subunit beta'.